The following is a 122-amino-acid chain: Small ribosomal subunit protein uS13 (122 aa).

Residues Arg-99–Lys-122 form a disordered region.

The protein belongs to the universal ribosomal protein uS13 family. Part of the 30S ribosomal subunit. Forms a loose heterodimer with protein S19. Forms two bridges to the 50S subunit in the 70S ribosome.

In terms of biological role, located at the top of the head of the 30S subunit, it contacts several helices of the 16S rRNA. In the 70S ribosome it contacts the 23S rRNA (bridge B1a) and protein L5 of the 50S subunit (bridge B1b), connecting the 2 subunits; these bridges are implicated in subunit movement. Contacts the tRNAs in the A and P-sites. The polypeptide is Small ribosomal subunit protein uS13 (Bradyrhizobium sp. (strain ORS 278)).